The following is a 609-amino-acid chain: Wee1-like protein kinase (609 aa).

Residues 1–10 (MAFRQSEHEM) are compositionally biased toward basic and acidic residues. 2 disordered regions span residues 1 to 88 (MAFR…SMSP) and 147 to 166 (PLHN…PFTP). Phosphoserine occurs at positions 23, 25, and 27. A compositionally biased stretch (basic and acidic residues) spans 37–48 (RFADDDFDKDTP). A Phosphothreonine modification is found at threonine 47. Residue serine 52 is modified to Phosphoserine. The segment covering 153–165 (LPTQDTANVNPFT) has biased composition (polar residues). Threonine 165 is modified (phosphothreonine). Serine 168 bears the Phosphoserine mark. The Protein kinase domain maps to 239–517 (FMQVNVIGVG…SQSIFSHPIL (279 aa)). ATP is bound by residues 245 to 253 (IGVGEFGVV) and lysine 268. Residue aspartate 361 is the Proton acceptor of the active site. The Mg(2+) site is built by asparagine 366 and aspartate 412.

The protein belongs to the protein kinase superfamily. Ser/Thr protein kinase family. WEE1 subfamily. Mg(2+) is required as a cofactor. Phosphorylated during M and G1 phases. As to expression, expressed in embryos; expression remains high in the proliferating cells of the central nervous system well after cells in the rest of the embryo have ceased dividing.

It is found in the nucleus. It catalyses the reaction L-tyrosyl-[protein] + ATP = O-phospho-L-tyrosyl-[protein] + ADP + H(+). With respect to regulation, negatively regulated by phosphorylation in the M-phase. Its function is as follows. Acts as a negative regulator of entry into mitosis (G2 to M transition). This kinase specifically phosphorylates and inactivates cyclin B1-complexed CDC2. The protein is Wee1-like protein kinase of Drosophila melanogaster (Fruit fly).